The following is a 273-amino-acid chain: Large ribosomal subunit protein uL2 (273 aa).

2 disordered regions span residues 28 to 55 (TPEK…RHRG) and 222 to 273 (GMAM…SKRK). Residues 255–273 (YKTRKKRRVSDRFIVSKRK) show a composition bias toward basic residues.

This sequence belongs to the universal ribosomal protein uL2 family. In terms of assembly, part of the 50S ribosomal subunit. Forms a bridge to the 30S subunit in the 70S ribosome.

One of the primary rRNA binding proteins. Required for association of the 30S and 50S subunits to form the 70S ribosome, for tRNA binding and peptide bond formation. It has been suggested to have peptidyltransferase activity; this is somewhat controversial. Makes several contacts with the 16S rRNA in the 70S ribosome. The chain is Large ribosomal subunit protein uL2 from Treponema pallidum (strain Nichols).